We begin with the raw amino-acid sequence, 144 residues long: Large ribosomal subunit protein uL13 (144 aa).

It belongs to the universal ribosomal protein uL13 family. As to quaternary structure, part of the 50S ribosomal subunit.

Its function is as follows. This protein is one of the early assembly proteins of the 50S ribosomal subunit, although it is not seen to bind rRNA by itself. It is important during the early stages of 50S assembly. This is Large ribosomal subunit protein uL13 from Buchnera aphidicola subsp. Baizongia pistaciae (strain Bp).